The primary structure comprises 615 residues: Chaperone protein HscA homolog (615 aa).

It belongs to the heat shock protein 70 family.

In terms of biological role, chaperone involved in the maturation of iron-sulfur cluster-containing proteins. Has a low intrinsic ATPase activity which is markedly stimulated by HscB. In Aeromonas salmonicida (strain A449), this protein is Chaperone protein HscA homolog.